The sequence spans 208 residues: LexA repressor (208 aa).

A DNA-binding region (H-T-H motif) is located at residues 29 to 49; the sequence is VREICGAVGLSSTSTVHGHIN. Catalysis depends on for autocatalytic cleavage activity residues serine 129 and lysine 167.

This sequence belongs to the peptidase S24 family. Homodimer.

It carries out the reaction Hydrolysis of Ala-|-Gly bond in repressor LexA.. In terms of biological role, represses a number of genes involved in the response to DNA damage (SOS response), including recA and lexA. In the presence of single-stranded DNA, RecA interacts with LexA causing an autocatalytic cleavage which disrupts the DNA-binding part of LexA, leading to derepression of the SOS regulon and eventually DNA repair. The chain is LexA repressor from Limosilactobacillus fermentum (strain NBRC 3956 / LMG 18251) (Lactobacillus fermentum).